A 257-amino-acid chain; its full sequence is Large ribosomal subunit protein uL3 (257 aa).

The tract at residues 232-257 is disordered; that stretch reads LKAPKKQKTKVETNQVNPKIEEEKTK.

It belongs to the universal ribosomal protein uL3 family. In terms of assembly, part of the 50S ribosomal subunit. Forms a cluster with proteins L14 and L19.

Functionally, one of the primary rRNA binding proteins, it binds directly near the 3'-end of the 23S rRNA, where it nucleates assembly of the 50S subunit. The polypeptide is Large ribosomal subunit protein uL3 (Mycoplasma genitalium (strain ATCC 33530 / DSM 19775 / NCTC 10195 / G37) (Mycoplasmoides genitalium)).